Reading from the N-terminus, the 566-residue chain is Tetratricopeptide repeat protein 34 (566 aa).

The tract at residues 1-29 is disordered; the sequence is MLQRSPRAGPSRAQGRREAAETGGPTTQE. 8 TPR repeats span residues 50–83, 178–211, 212–245, 306–339, 341–373, 424–457, 464–497, and 512–545; these read EASRLLAADALYRLGRLEETHKALLVALSRRPQA, SESLLARARCYGFLGQKKTAMFDFNTVLRAEPGN, VQALCGRALVHLALDQLQEAVDDIVSALKLGPGT, PHWHLLLADILMAQGSYEEAGTHLEKALHRAPTS, AARARLGLLQLKKGDVPGAARDLQSLAEVDAPD, ACHLRLRATCLAELQEFGRALRDLDHVLQEALGD, AEDFCRQGRLLLSLGDEAAAAGAFAQALKLAPSL, and ARMFLLRGQCCLEEQRHAEAWTAVESGLLVDPDH.

In Homo sapiens (Human), this protein is Tetratricopeptide repeat protein 34 (TTC34).